The following is a 2603-amino-acid chain: Ankyrin repeat domain-containing protein 17 (2603 aa).

Met-1 carries the post-translational modification N-acetylmethionine. Low complexity-rich tracts occupy residues 1–34 and 42–53; these read MEKA…AAAE and SSRARSASSPRG. Residues 1–143 form a disordered region; that stretch reads MEKATVPVAA…SFILDQDDLE (143 aa). Ser-19 and Ser-50 each carry phosphoserine. Over residues 63 to 79 the composition is skewed to basic residues; that stretch reads KKKPPQQQHHKAKRNRT. The segment covering 84-94 has biased composition (low complexity); the sequence is SSSESSSDSDN. The span at 95–111 shows a compositional bias: gly residues; that stretch reads SGGGGGGGGGGGGGGGT. A compositionally biased stretch (acidic residues) spans 116–131; sequence SEEEEDDDDEEEEVSE. At Ser-156 the chain carries Phosphoserine. ANK repeat units lie at residues 233 to 262, 266 to 295, 300 to 329, 333 to 362, 366 to 395, 400 to 429, 433 to 462, 466 to 495, 499 to 528, 533 to 562, 563 to 592, 596 to 625, 629 to 658, 663 to 692, and 696 to 725; these read SDNR…SVNE, EGES…NVED, GDIT…DVNA, TGNT…SIED, NGHT…GINT, FKES…DQEH, EMHT…QVNM, SFES…SLEE, EGYT…NINA, TQET…DIEL, GCST…NVHA, TGDT…DLEH, GGRT…NVNR, NDHT…DPTH, and DGST…NLLS. Lys-318 participates in a covalent cross-link: Glycyl lysine isopeptide (Lys-Gly) (interchain with G-Cter in SUMO2). Position 803 is a phosphoserine (Ser-803). ANK repeat units follow at residues 1082 to 1111, 1115 to 1144, 1149 to 1178, 1182 to 1211, 1217 to 1246, 1251 to 1280, 1284 to 1313, 1319 to 1348, 1352 to 1381, and 1385 to 1414; these read NHDT…SIEH, KGFT…DIEA, TKDT…NKEH, SDYT…EINS, LGIS…DINA, NRNT…NVEH, TGLT…DVNA, SRDT…HIDV, KGNT…DVDA, and RKIT…QFPS. Residues 1442-1526 are a coiled coil; sequence VQAKDRQAAE…EKEKLKVEDE (85 aa). Ser-1457 is modified (phosphoserine). Disordered regions lie at residues 1479 to 1500 and 1517 to 1717; these read AKRE…RKLE and EKEK…QKRE. Basic residues predominate over residues 1481–1491; that stretch reads REKRKEKRRKK. 3 stretches are compositionally biased toward low complexity: residues 1531–1550, 1602–1611, and 1620–1632; these read TEPP…TWTT, ESKSSSTSES, and SSCS…SNSS. Phosphoserine occurs at positions 1635 and 1639. Composition is skewed to polar residues over residues 1642-1652 and 1675-1703; these read VVTTTVSSKKQ and LSET…SPNG. Residues Ser-1696, Ser-1700, and Ser-1709 each carry the phosphoserine modification. In terms of domain architecture, KH spans 1725–1789; it reads RRSKKVSVPS…ESTRQATQLI (65 aa). Arg-1874 is modified (asymmetric dimethylarginine). 3 disordered regions span residues 1906–1995, 2011–2192, and 2273–2332; these read PRLP…PSVR, TTVT…HKNS, and VVSS…YGSV. Composition is skewed to low complexity over residues 1950–1995 and 2011–2028; these read SNQN…PSVR and TTVT…TNAT. 6 positions are modified to phosphoserine: Ser-2042, Ser-2044, Ser-2045, Ser-2047, Ser-2059, and Ser-2067. The segment covering 2066-2078 has biased composition (polar residues); it reads ASPNKVASSSEQE. Over residues 2095-2106 the composition is skewed to low complexity; the sequence is SSSSSGSSSAHS. Polar residues-rich tracts occupy residues 2107 to 2127 and 2273 to 2303; these read NQQQ…QQSQ and VVSS…SDTS. Over residues 2308–2318 the composition is skewed to pro residues; that stretch reads FRPPLQRPAPS. Residues Ser-2373 and Ser-2401 each carry the phosphoserine modification. Residues 2381–2423 form a disordered region; that stretch reads CSSASNDSSAQSVSSGVRAPSPAPSSVPLGSEKPSNVSQDRKV. Residues 2382 to 2411 are compositionally biased toward low complexity; sequence SSASNDSSAQSVSSGVRAPSPAPSSVPLGS.

As to quaternary structure, interacts (via N-terminus) with NOD2. Interacts with CDK2, MCM3, MCM5, MCM7, CDC6 and PCNA. Interacts with MAVS and IFIH1. Interacts (via the second ankyrin repeat cluster) with DDX58. In terms of assembly, (Microbial infection) Interacts with enterovirus 71/EV71 capsid protein VP1. Phosphorylated by CDK2. Ubiquitously expressed.

It is found in the cytoplasm. It localises to the nucleus. Functionally, could play pivotal roles in cell cycle and DNA regulation. Involved in innate immune defense against viruse by positively regulating the viral dsRNA receptors DDX58 and IFIH1 signaling pathways. Involves in NOD2- and NOD1-mediated responses to bacteria suggesting a role in innate antibacterial immune pathways too. Target of enterovirus 71 which is the major etiological agent of HFMD (hand, foot and mouth disease). Could play a central role for the formation and/or maintenance of the blood vessels of the circulation system. In Homo sapiens (Human), this protein is Ankyrin repeat domain-containing protein 17 (ANKRD17).